The following is a 724-amino-acid chain: N-alpha-acetyltransferase 35, NatC auxiliary subunit (724 aa).

It belongs to the MAK10 family. In terms of assembly, component of the N-terminal acetyltransferase C (NatC) complex.

Its subcellular location is the cytoplasm. In terms of biological role, auxillary component of the N-terminal acetyltransferase C (NatC) complex which catalyzes acetylation of N-terminal methionine residues. N-terminal acetylation protects proteins from ubiquitination and degradation by the N-end rule pathway. Regulates cell proliferation during embryonic development. This is N-alpha-acetyltransferase 35, NatC auxiliary subunit (naa35) from Danio rerio (Zebrafish).